The following is a 494-amino-acid chain: MTDIIRSDAATLAAKIAIKEVSSTEITRACLDQIEATDETYHAFLHVAADEALAAAAAVDKQVAAGEPLPSALAGVPLALKDVFTTSDMPTTCGSKILEGWRSPYDATLTARLRAAGIPILGKTNMDEFAMGSSTENSAYGPTRNPWNLDRVPGGSGGGSAAALAAFQAPLAIGSDTGGSIRQPAALTATVGVKPTYGTVSRYGLVACASSLDQGGPCARTVLDTALLHQVIAGHDPRDSTSVDAEVPDVVGAARAGAVGDLRGVRVGVVRQLHGGEGYQPGVLASFEAAVEQLTALGAEVSEVDCPHFDHALAAYYLILPSEVSSNLARFDAMRYGLRVGDDGTRSAEEVMAMTRAAGFGPEVKRRIMIGTYALSAGYYDAYYNQAQKVRTLIARDLDAAYRSVDVLVSPTTPTTAFRLGEKVDDPLAMYLFDLCTLPLNLAGHCGMSVPSGLSPDDGLPVGLQIMAPALADDRLYRVGAAYEAARGPLLSAI.

Catalysis depends on charge relay system residues Lys-81 and Ser-156. Ser-180 (acyl-ester intermediate) is an active-site residue.

Belongs to the amidase family. GatA subfamily. In terms of assembly, heterotrimer of A, B and C subunits.

The enzyme catalyses L-glutamyl-tRNA(Gln) + L-glutamine + ATP + H2O = L-glutaminyl-tRNA(Gln) + L-glutamate + ADP + phosphate + H(+). Allows the formation of correctly charged Gln-tRNA(Gln) through the transamidation of misacylated Glu-tRNA(Gln) in organisms which lack glutaminyl-tRNA synthetase. The reaction takes place in the presence of glutamine and ATP through an activated gamma-phospho-Glu-tRNA(Gln). This is Glutamyl-tRNA(Gln) amidotransferase subunit A from Mycobacterium bovis (strain ATCC BAA-935 / AF2122/97).